The chain runs to 132 residues: N,N-dimethylformamidase alpha subunit (132 aa).

Heterotetramer of two DmfA1 (alpha) and two DmfA2 (beta) subunits.

The enzyme catalyses N,N-dimethylformamide + H2O = dimethylamine + formate. Its activity is regulated as follows. Activity is slightly inhibited by Mg(2+) and Mn(2+), and slightly increased by Cu(2+). Activity is slightly inhibited by the chelating agents 8-hydroxyquinoline, ethylenediaminetetraacetate, o-phenanthroline and 2,2'-bipyridyl. In terms of biological role, hydrolyzes N,N-dimethylformamide, and to a lesser extent N,N-dimethylacetamide and N,N-diethylacetamide. Has no activity against the substituted amides N-methylformamide, N-ethylformamide, N-ethylformamide and N-methylacetamide or the unsubstituted amides formamide, nicotinamide, acetoamide, benzamide, acetamide and acrylamide. In Alcaligenes sp, this protein is N,N-dimethylformamidase alpha subunit.